A 429-amino-acid polypeptide reads, in one-letter code: Enolase (429 aa).

(2R)-2-phosphoglycerate is bound at residue Gln165. Glu207 (proton donor) is an active-site residue. The Mg(2+) site is built by Asp244, Glu287, and Asp314. (2R)-2-phosphoglycerate is bound by residues Lys339, Arg368, Ser369, and Lys390. Lys339 (proton acceptor) is an active-site residue.

The protein belongs to the enolase family. Mg(2+) serves as cofactor.

The protein localises to the cytoplasm. The protein resides in the secreted. Its subcellular location is the cell surface. It carries out the reaction (2R)-2-phosphoglycerate = phosphoenolpyruvate + H2O. The protein operates within carbohydrate degradation; glycolysis; pyruvate from D-glyceraldehyde 3-phosphate: step 4/5. Catalyzes the reversible conversion of 2-phosphoglycerate (2-PG) into phosphoenolpyruvate (PEP). It is essential for the degradation of carbohydrates via glycolysis. The chain is Enolase from Roseiflexus castenholzii (strain DSM 13941 / HLO8).